Consider the following 420-residue polypeptide: Gamma-glutamyl phosphate reductase 2 (420 aa).

It belongs to the gamma-glutamyl phosphate reductase family.

Its subcellular location is the cytoplasm. The catalysed reaction is L-glutamate 5-semialdehyde + phosphate + NADP(+) = L-glutamyl 5-phosphate + NADPH + H(+). The protein operates within amino-acid biosynthesis; L-proline biosynthesis; L-glutamate 5-semialdehyde from L-glutamate: step 2/2. Functionally, catalyzes the NADPH-dependent reduction of L-glutamate 5-phosphate into L-glutamate 5-semialdehyde and phosphate. The product spontaneously undergoes cyclization to form 1-pyrroline-5-carboxylate. The sequence is that of Gamma-glutamyl phosphate reductase 2 from Synechocystis sp. (strain ATCC 27184 / PCC 6803 / Kazusa).